The sequence spans 1117 residues: Sodium-driven chloride bicarbonate exchanger (1117 aa).

Residues 1-14 (MQSGTCESFQSLSH) are compositionally biased toward polar residues. Disordered stretches follow at residues 1 to 26 (MQSG…VDRG), 57 to 94 (GRKS…FDTP), 244 to 312 (KQSE…PHQQ), and 456 to 475 (NGTA…GPEL). The Cytoplasmic portion of the chain corresponds to 1–508 (MQSGTCESFQ…DFTDALSLQC (508 aa)). Positions 15 to 26 (QRNDEEAVVDRG) are enriched in basic and acidic residues. A compositionally biased stretch (basic residues) spans 58–75 (RKSHRRHRHRGHKHRKRD). The span at 76–89 (RERDSGLEDGRESP) shows a compositional bias: basic and acidic residues. Position 88 is a phosphoserine (Ser88). Phosphothreonine is present on Thr93. Residues 247-263 (EPNSMDKNAGQVVSPQS) show a composition bias toward polar residues. Ser275 carries the post-translational modification Phosphoserine. Residues 509-529 (LASFLFLYCACMSPVITFGGL) traverse the membrane as a helical segment. At 530–537 (LGEATEGR) the chain is on the extracellular side. The helical transmembrane segment at 538–558 (ISAIESLFGASMTGIAYSLFG) threads the bilayer. Topologically, residues 559 to 561 (GQP) are cytoplasmic. A helical membrane pass occupies residues 562-582 (LTILGSTGPVLVFEKILFKFC). At 583–595 (KEYGLSYLSLRAS) the chain is on the extracellular side. The chain crosses the membrane as a helical span at residues 596–616 (IGLWTATLCIILVATDASSLV). The Cytoplasmic segment spans residues 617–625 (CYITRFTEE). Residues 626–646 (AFASLICIIFIYEALEKLFEL) form a helical membrane-spanning segment. Topologically, residues 647–719 (SEAYPINMHN…VGRACGHEHP (73 aa)) are extracellular. Residues Asn673, Asn676, Asn686, and Asn696 are each glycosylated (N-linked (GlcNAc...) asparagine). The chain crosses the membrane as a helical span at residues 720–740 (YVPDVLFWSVILFFSTVTLSA). Topologically, residues 741 to 761 (TLKQFKTSRYFPTKVRSIVSD) are cytoplasmic. A helical transmembrane segment spans residues 762 to 782 (FAVFLTILCMVLIDYAIGIPS). At 783 to 808 (PKLQVPSVFKPTRDDRGWFVTPLGPN) the chain is on the extracellular side. The helical transmembrane segment at 809–829 (PWWTVIAAIIPALLCTILIFM) threads the bilayer. The Cytoplasmic portion of the chain corresponds to 830–854 (DQQITAVIINRKEHKLKKGCGYHLD). Residues 855–875 (LLMVAVMLGVCSIMGLPWFVA) form a helical membrane-spanning segment. The Extracellular segment spans residues 876-911 (ATVLSITHVNSLKLESECSAPGEQPKFLGIREQRVT). A helical transmembrane segment spans residues 912–932 (GLMIFILMGSSVFMTSILKFI). The Cytoplasmic portion of the chain corresponds to 933 to 934 (PM). A helical transmembrane segment spans residues 935–955 (PVLYGVFLYMGASSLKGIQFF). Topologically, residues 956–997 (DRIKLFWMPAKHQPDFIYLRHVPLRKVHLFTVIQMSCLGLLW) are extracellular. The helical transmembrane segment at 998-1018 (IIKVSRAAIVFPMMVLALVFV) threads the bilayer. The Cytoplasmic portion of the chain corresponds to 1019–1117 (RKLMDFLFTK…SSFPSKSSPS (99 aa)). 2 positions are modified to phosphoserine: Ser1056 and Ser1084.

The protein belongs to the anion exchanger (TC 2.A.31) family. N-glycosylated.

The protein resides in the basolateral cell membrane. It is found in the apical cell membrane. The protein localises to the cell projection. Its subcellular location is the dendrite. It localises to the axon. The protein resides in the perikaryon. It is found in the presynapse. The protein localises to the postsynapse. Its function is as follows. Sodium/bicarbonate cotransporter which plays an important role in regulating intracellular pH. Has been shown to act as a sodium/bicarbonate cotransporter in exchange for intracellular chloride. Has also been shown to act as a sodium/biocarbonate cotransporter which does not couple net influx of bicarbonate to net efflux of chloride, with the observed chloride efflux being due to chloride self-exchange. Controls neuronal pH and may contribute to the secretion of cerebrospinal fluid. Acting on presynaptic intracellular pH, it promotes GABA release, reduces the excitability of CA1 pyramidal neurons, and modulates short-term synaptic plasticity. Required in retinal cells to maintain normal pH which is necessary for normal vision. In the kidney, likely to mediate bicarbonate reclamation in the apical membrane of the proximal tubules. In Bos taurus (Bovine), this protein is Sodium-driven chloride bicarbonate exchanger.